We begin with the raw amino-acid sequence, 145 residues long: uncharacterized protein (145 aa).

The first 29 residues, 1–29 (MHLIRAAGAVCLAVVLIAGCRFNEDQHQA), serve as a signal peptide directing secretion. A coiled-coil region spans residues 67–101 (KNGTQEKAEIQDKLSGVNQEGEEALDEMKMILSEL).

This is an uncharacterized protein from Bacillus subtilis (strain 168).